A 419-amino-acid polypeptide reads, in one-letter code: Cytosine permease (419 aa).

Residues 1-19 lie on the Cytoplasmic side of the membrane; the sequence is MSQDNNFSQGPVPQSARKG. A helical transmembrane segment spans residues 20–39; it reads VLALTFVMLGLTFFSASMWT. Topologically, residues 40–51 are periplasmic; sequence GGTLGTGLSYHD. A helical transmembrane segment spans residues 52–71; sequence FFLAVLIGNLLLGIYTSFLG. Topologically, residues 72 to 100 are cytoplasmic; it reads YIGAKTGLTTHLLARFSFGVKGSWLPSLL. The chain crosses the membrane as a helical span at residues 101-120; that stretch reads LGGTQVGWFGVGVAMFAIPV. The Periplasmic portion of the chain corresponds to 121–127; it reads GKATGLD. A helical membrane pass occupies residues 128–147; it reads INLLIAVSGLLMTVTVFFGI. The Cytoplasmic segment spans residues 148 to 152; that stretch reads SALTV. A helical membrane pass occupies residues 153 to 172; it reads LSVIAVPAIACLGGYSVWLA. Residues 173 to 192 lie on the Periplasmic side of the membrane; it reads VNGMGGLDALKAVVPAQPLD. Residues 193-212 form a helical membrane-spanning segment; the sequence is FNVALALVVGSFISAGTLTA. Over 213 to 221 the chain is Cytoplasmic; that stretch reads DFVRFGRNA. The helical transmembrane segment at 222–242 threads the bilayer; it reads KLAVLVAMVAFFLGNSLMFIF. The Periplasmic portion of the chain corresponds to 243-257; it reads GAAGAAALGMADISD. A helical transmembrane segment spans residues 258-277; the sequence is VMIAQGLLLPAIVVLGLNIW. Residues 278–300 are Cytoplasmic-facing; the sequence is TTNDNALYASGLGFANITGMSSK. A helical transmembrane segment spans residues 301–320; it reads TLSVINGIIGTVCALWLYNN. Position 321 (F321) is a topological domain, periplasmic. Residues 322 to 341 traverse the membrane as a helical segment; the sequence is VGWLTFLSAAIPPVGGVIIA. The Cytoplasmic portion of the chain corresponds to 342–358; the sequence is DYLMNRRRYEHFATTRM. A helical transmembrane segment spans residues 359–378; the sequence is MSVNWVAILAVALGIAAGHW. At 379–380 the chain is on the periplasmic side; it reads LP. The helical transmembrane segment at 381–400 threads the bilayer; sequence GIVPVNAVLGGALSYLILNP. The Cytoplasmic portion of the chain corresponds to 401-419; sequence ILNRKTTAAMTHVEANSVE.

Belongs to the purine-cytosine permease (2.A.39) family.

The protein resides in the cell inner membrane. Functionally, required for cytosine transport into the cell. The sequence is that of Cytosine permease (codB) from Escherichia coli O6:H1 (strain CFT073 / ATCC 700928 / UPEC).